The primary structure comprises 3535 residues: Lysosomal-trafficking regulator (3535 aa).

The interval 412–436 (MESSASTAMPKQQQHPRHKRQRSSQ) is disordered. One copy of the WD 1 repeat lies at 689–736 (TLSRRLIQLQLNSSDRASQLFQALLYKCSKHSRAKFWLDESSTPAKLE). Residues 1066-1096 (STHQEPTGVVNSPSGDSQQPRPRARSFNSGS) show a composition bias toward polar residues. Disordered regions lie at residues 1066–1132 (STHQ…NAGV) and 1592–1613 (GEGQ…TLDG). The segment covering 1596–1610 (PTGRSPGSSSSSRST) has biased composition (low complexity). Residues 2686–2784 (SLNSQILYNF…MREVFCDKIV (99 aa)) enclose the BEACH-type PH domain. The BEACH domain occupies 2784–3081 (VATPDQSKVI…QLFKSPHPAS (298 aa)). Residues 3254 to 3287 (GIGGGGSERVDEAGNLHPTSSASSVNSSSISSGG) form a disordered region. The span at 3273–3285 (SSASSVNSSSISS) shows a compositional bias: low complexity. WD repeat units lie at residues 3307-3346 (RHTD…YVRT), 3442-3486 (VHED…FVSE), and 3489-3527 (TGTS…GNAP).

As to quaternary structure, interacts with Rab5; the interaction is independent of GDP or GTP. Interacts with msps.

It localises to the vesicle. It is found in the cytoplasm. The protein localises to the cytoskeleton. The protein resides in the spindle. Its subcellular location is the spindle pole. Adapter protein that regulates intracellular membrane fusion reactions. Regulates the fusion of lysosome-related organelles. Promotes microtubules nucleation and centrosomal recruitment of microtubule nucleating proteins such as msps. In syncytial embryos, during the formation of yolk granules, suppresses vesicle fusion events with lipid droplets, possibly via interaction with Rab5. In the eye, regulates pigment granules size. In hemocytes, required for the late steps of bacteria phagocytosis. In fat body, required for autophagosome maturation. This chain is Lysosomal-trafficking regulator, found in Drosophila melanogaster (Fruit fly).